The chain runs to 253 residues: 2-succinyl-6-hydroxy-2,4-cyclohexadiene-1-carboxylate synthase (253 aa).

Residues 11-147 (PWLVCLHGLF…PEALQDWYQQ (137 aa)) form the AB hydrolase-1 domain.

The protein belongs to the AB hydrolase superfamily. MenH family. As to quaternary structure, monomer.

It carries out the reaction 5-enolpyruvoyl-6-hydroxy-2-succinyl-cyclohex-3-ene-1-carboxylate = (1R,6R)-6-hydroxy-2-succinyl-cyclohexa-2,4-diene-1-carboxylate + pyruvate. The protein operates within quinol/quinone metabolism; 1,4-dihydroxy-2-naphthoate biosynthesis; 1,4-dihydroxy-2-naphthoate from chorismate: step 3/7. Its pathway is quinol/quinone metabolism; menaquinone biosynthesis. Functionally, catalyzes a proton abstraction reaction that results in 2,5-elimination of pyruvate from 2-succinyl-5-enolpyruvyl-6-hydroxy-3-cyclohexene-1-carboxylate (SEPHCHC) and the formation of 2-succinyl-6-hydroxy-2,4-cyclohexadiene-1-carboxylate (SHCHC). This is 2-succinyl-6-hydroxy-2,4-cyclohexadiene-1-carboxylate synthase from Pectobacterium atrosepticum (strain SCRI 1043 / ATCC BAA-672) (Erwinia carotovora subsp. atroseptica).